The following is an 878-amino-acid chain: Alanine--tRNA ligase (878 aa).

Histidine 567, histidine 571, cysteine 669, and histidine 673 together coordinate Zn(2+).

The protein belongs to the class-II aminoacyl-tRNA synthetase family. Requires Zn(2+) as cofactor.

Its subcellular location is the cytoplasm. The catalysed reaction is tRNA(Ala) + L-alanine + ATP = L-alanyl-tRNA(Ala) + AMP + diphosphate. In terms of biological role, catalyzes the attachment of alanine to tRNA(Ala) in a two-step reaction: alanine is first activated by ATP to form Ala-AMP and then transferred to the acceptor end of tRNA(Ala). Also edits incorrectly charged Ser-tRNA(Ala) and Gly-tRNA(Ala) via its editing domain. The sequence is that of Alanine--tRNA ligase from Rickettsia conorii (strain ATCC VR-613 / Malish 7).